The primary structure comprises 436 residues: Phosphomethylpyrimidine synthase (436 aa).

Residues Asn-68, Met-97, Tyr-126, His-166, 188–190 (SRG), 229–232 (DGFR), and Glu-268 each bind substrate. His-272 serves as a coordination point for Zn(2+). Residue Tyr-295 coordinates substrate. Residue His-336 participates in Zn(2+) binding. The [4Fe-4S] cluster site is built by Cys-412, Cys-415, and Cys-419.

It belongs to the ThiC family. Homodimer. [4Fe-4S] cluster is required as a cofactor.

It carries out the reaction 5-amino-1-(5-phospho-beta-D-ribosyl)imidazole + S-adenosyl-L-methionine = 4-amino-2-methyl-5-(phosphooxymethyl)pyrimidine + CO + 5'-deoxyadenosine + formate + L-methionine + 3 H(+). Its pathway is cofactor biosynthesis; thiamine diphosphate biosynthesis. Its function is as follows. Catalyzes the synthesis of the hydroxymethylpyrimidine phosphate (HMP-P) moiety of thiamine from aminoimidazole ribotide (AIR) in a radical S-adenosyl-L-methionine (SAM)-dependent reaction. In Geobacter metallireducens (strain ATCC 53774 / DSM 7210 / GS-15), this protein is Phosphomethylpyrimidine synthase.